The primary structure comprises 42 residues: Photosystem I reaction center subunit IX (42 aa).

The chain crosses the membrane as a helical span at residues 7–27; sequence FLSTAPVLIMALLTVTAGILI.

It belongs to the PsaJ family.

The protein localises to the cellular thylakoid membrane. Its function is as follows. May help in the organization of the PsaE and PsaF subunits. This Crocosphaera subtropica (strain ATCC 51142 / BH68) (Cyanothece sp. (strain ATCC 51142)) protein is Photosystem I reaction center subunit IX.